A 116-amino-acid chain; its full sequence is Large ribosomal subunit protein uL24 (116 aa).

The disordered stretch occupies residues 1 to 21; sequence MATNNGAGKARHKFHVKKGDT.

This sequence belongs to the universal ribosomal protein uL24 family. As to quaternary structure, part of the 50S ribosomal subunit.

Its function is as follows. One of two assembly initiator proteins, it binds directly to the 5'-end of the 23S rRNA, where it nucleates assembly of the 50S subunit. In terms of biological role, one of the proteins that surrounds the polypeptide exit tunnel on the outside of the subunit. The sequence is that of Large ribosomal subunit protein uL24 from Gloeobacter violaceus (strain ATCC 29082 / PCC 7421).